Reading from the N-terminus, the 66-residue chain is Large ribosomal subunit protein bL33c (66 aa).

Belongs to the bacterial ribosomal protein bL33 family.

The protein localises to the plastid. It localises to the chloroplast. The chain is Large ribosomal subunit protein bL33c from Solanum bulbocastanum (Wild potato).